Consider the following 416-residue polypeptide: Serine hydroxymethyltransferase 1 (416 aa).

Residues L121 and 125–127 contribute to the (6S)-5,6,7,8-tetrahydrofolate site; that span reads GHL. The residue at position 229 (K229) is an N6-(pyridoxal phosphate)lysine. (6S)-5,6,7,8-tetrahydrofolate contacts are provided by residues E245 and 354–356; that span reads SPF.

Belongs to the SHMT family. As to quaternary structure, homodimer. Requires pyridoxal 5'-phosphate as cofactor.

The protein localises to the cytoplasm. It catalyses the reaction (6R)-5,10-methylene-5,6,7,8-tetrahydrofolate + glycine + H2O = (6S)-5,6,7,8-tetrahydrofolate + L-serine. The protein operates within one-carbon metabolism; tetrahydrofolate interconversion. It functions in the pathway amino-acid biosynthesis; glycine biosynthesis; glycine from L-serine: step 1/1. Its function is as follows. Catalyzes the reversible interconversion of serine and glycine with tetrahydrofolate (THF) serving as the one-carbon carrier. This reaction serves as the major source of one-carbon groups required for the biosynthesis of purines, thymidylate, methionine, and other important biomolecules. Also exhibits THF-independent aldolase activity toward beta-hydroxyamino acids, producing glycine and aldehydes, via a retro-aldol mechanism. In Photobacterium profundum (strain SS9), this protein is Serine hydroxymethyltransferase 1.